Reading from the N-terminus, the 247-residue chain is MTISNRILLGVNIDHVATLRQARGTRYPDPVKAALDAEEAGADGITVHLREDRRHIQERDVLLLKDVLQTRMNFEMGVTEEMMAFAERIRPAHICLVPETRQELTTEGGLDVAGQEERIRAAVERLSKIGSEVSLFIDADERQIAASKRVGAPAIELHTGRYADAETPSEVAEELKRVADGVAFGLAQGLIVNAGHGLHYHNVEAVAAIKGINELNIGHALVAHALFVGFKSAVSEMKTLILAAARH.

Asn-12 is a binding site for 3-amino-2-oxopropyl phosphate. 14–15 (DH) serves as a coordination point for 1-deoxy-D-xylulose 5-phosphate. 3-amino-2-oxopropyl phosphate is bound at residue Arg-23. The active-site Proton acceptor is His-48. Positions 50 and 55 each coordinate 1-deoxy-D-xylulose 5-phosphate. Glu-75 functions as the Proton acceptor in the catalytic mechanism. Residue Thr-105 participates in 1-deoxy-D-xylulose 5-phosphate binding. The active-site Proton donor is His-196. 3-amino-2-oxopropyl phosphate-binding positions include Gly-197 and 218–219 (GH).

Belongs to the PNP synthase family. In terms of assembly, homooctamer; tetramer of dimers.

It is found in the cytoplasm. It carries out the reaction 3-amino-2-oxopropyl phosphate + 1-deoxy-D-xylulose 5-phosphate = pyridoxine 5'-phosphate + phosphate + 2 H2O + H(+). The protein operates within cofactor biosynthesis; pyridoxine 5'-phosphate biosynthesis; pyridoxine 5'-phosphate from D-erythrose 4-phosphate: step 5/5. In terms of biological role, catalyzes the complicated ring closure reaction between the two acyclic compounds 1-deoxy-D-xylulose-5-phosphate (DXP) and 3-amino-2-oxopropyl phosphate (1-amino-acetone-3-phosphate or AAP) to form pyridoxine 5'-phosphate (PNP) and inorganic phosphate. This Pseudomonas fluorescens (strain Pf0-1) protein is Pyridoxine 5'-phosphate synthase.